A 132-amino-acid chain; its full sequence is Small ribosomal subunit protein uS8 (132 aa).

Belongs to the universal ribosomal protein uS8 family. Part of the 30S ribosomal subunit. Contacts proteins S5 and S12.

Its function is as follows. One of the primary rRNA binding proteins, it binds directly to 16S rRNA central domain where it helps coordinate assembly of the platform of the 30S subunit. The sequence is that of Small ribosomal subunit protein uS8 from Rickettsia canadensis (strain McKiel).